Consider the following 308-residue polypeptide: Growth/differentiation factor 15 (308 aa).

Residues Met1–Ala29 form the signal peptide. Residues Val30–Arg192 constitute a propeptide that is removed on maturation. Asn70 carries an N-linked (GlcNAc...) asparagine glycan. The disordered stretch occupies residues Ala152 to Gln179. The span at Gln165 to Pro178 shows a compositional bias: polar residues. Intrachain disulfides connect Cys203–Cys210, Cys211–Cys274, Cys240–Cys305, and Cys244–Cys307.

It belongs to the TGF-beta family. Homodimer; disulfide-linked. Interacts with GFRAL and RET; ligand of GFRAL, which mediates GDF15 internalization and cellular signaling through interaction with RET via the formation of a 2:2:2 ternary complex composed of GDF15, GFRAL and RET. As to expression, detected in plasma (at protein level).

The protein localises to the secreted. Its function is as follows. Hormone produced in response to various stresses to confer information about those stresses to the brain, and trigger an aversive response, characterized by nausea and/or loss of appetite. The aversive response is both required to reduce continuing exposure to those stresses at the time of exposure and to promote avoidance behavior in the future. Acts by binding to its receptor, GFRAL, activating GFRAL-expressing neurons localized in the area postrema and nucleus tractus solitarius of the brainstem. It then triggers the activation of neurons localized within the parabrachial nucleus and central amygdala, which constitutes part of the 'emergency circuit' that shapes responses to stressful conditions. The GDF15-GFRAL signal induces expression of genes involved in metabolism, such as lipid metabolism in adipose tissues. Required for avoidance behavior in response to food allergens: induced downstream of mast cell activation to promote aversion and minimize harmful effects of exposure to noxious substances. In addition to suppress appetite, also promotes weight loss by enhancing energy expenditure in muscle: acts by increasing calcium futile cycling in muscle. Contributes to the effect of metformin, an anti-diabetic drug, on appetite reduction and weight loss: produced in the kidney in response to metformin treatment, thereby activating the GDF15-GFRAL response, leading to reduced appetite and weight. Produced in response to anticancer drugs, such as camptothecin or cisplatin, promoting nausea and contributing to malnutrition. Overproduced in many cancers, promoting anorexia in cancer (cachexia). Responsible for the risk of nausea during pregnancy: high levels of GDF15 during pregnancy, mostly originating from embryos, are associated with increased nausea. Maternal sensitivity to nausea is probably determined by pre-pregnancy exposure to GDF15, females with naturally high level of GDF15 being less susceptible to nausea than females with low levels of GDF15 before pregnancy. Promotes metabolic adaptation in response to systemic inflammation caused by bacterial and viral infections in order to promote tissue tolerance and prevent tissue damage. Inhibits growth hormone signaling on hepatocytes. In Macaca fascicularis (Crab-eating macaque), this protein is Growth/differentiation factor 15.